The primary structure comprises 629 residues: Phosphoglucomutase, chloroplastic (629 aa).

The transit peptide at 1 to 69 directs the protein to the chloroplast; sequence MSSTYARFDT…SSSSGPIIAG (69 aa). The alpha-D-glucose 1,6-bisphosphate site is built by Arg-94 and Ser-187. Ser-187 serves as the catalytic Phosphoserine intermediate. Residues Ser-187, Asp-352, Asp-354, and Asp-356 each contribute to the Mg(2+) site. Ser-187 is subject to Phosphoserine. Residues Asp-356, Arg-357, Thr-420, Glu-439, Ser-441, and Lys-452 each coordinate alpha-D-glucose 1,6-bisphosphate.

The protein belongs to the phosphohexose mutase family. As to quaternary structure, monomer. Mg(2+) serves as cofactor.

The protein localises to the plastid. Its subcellular location is the chloroplast. The enzyme catalyses alpha-D-glucose 1-phosphate = alpha-D-glucose 6-phosphate. It carries out the reaction O-phospho-L-seryl-[protein] + alpha-D-glucose 1-phosphate = alpha-D-glucose 1,6-bisphosphate + L-seryl-[protein]. The catalysed reaction is alpha-D-glucose 1,6-bisphosphate + L-seryl-[protein] = O-phospho-L-seryl-[protein] + alpha-D-glucose 6-phosphate. With respect to regulation, inhibited by the Calvin cycle intermediates fructose-1,6-bisphosphate and ribulose-1,5-bisphosphate. Its function is as follows. Catalyzes the reversible isomerization of alpha-D-glucose 1-phosphate to alpha-D-glucose 6-phosphate. The mechanism proceeds via the intermediate compound alpha-D-glucose 1,6-bisphosphate. This enzyme participates in both the breakdown and synthesis of glucose. The protein is Phosphoglucomutase, chloroplastic (PGMP) of Brassica napus (Rape).